Consider the following 585-residue polypeptide: ATP-dependent lipid A-core flippase (585 aa).

5 helical membrane passes run 24–44, 65–85, 143–163, 165–185, and 253–273; these read LWKVFALAVLGNVIYALASAA, LLVPMLIIGIFALRGLGSFCG, ITVVLREGFTVIGLMGYMIYV, WKLTLLFLVLGPIIGVLIGYV, and PIIQLVISVFIALLVWLALSP. The region spanning 29-310 is the ABC transmembrane type-1 domain; that stretch reads ALAVLGNVIY…LTEVNAVIQR (282 aa). An ABC transporter domain is found at 342-578; it reads LEFKSLGFAY…DGAYAALHKL (237 aa). An ATP-binding site is contributed by 376–383; the sequence is GRSGSGKS.

The protein belongs to the ABC transporter superfamily. Lipid exporter (TC 3.A.1.106) family. Homodimer.

It localises to the cell inner membrane. The enzyme catalyses ATP + H2O + lipid A-core oligosaccharideSide 1 = ADP + phosphate + lipid A-core oligosaccharideSide 2.. In terms of biological role, involved in lipopolysaccharide (LPS) biosynthesis. Translocates lipid A-core from the inner to the outer leaflet of the inner membrane. Transmembrane domains (TMD) form a pore in the inner membrane and the ATP-binding domain (NBD) is responsible for energy generation. This Hahella chejuensis (strain KCTC 2396) protein is ATP-dependent lipid A-core flippase.